A 175-amino-acid polypeptide reads, in one-letter code: Bcl-2-related protein A1 (175 aa).

The short motif at 77–97 is the BH1 element; that stretch reads KEFEDGIINWGRIVTIFAFEG. The BH2 motif lies at 132–147; it reads EWIRQNGGWENGFVKK.

Belongs to the Bcl-2 family. In terms of assembly, interacts directly with BAK1, BID, BMF and BBC3. Interacts directly with BCL2L11/BIM. Interacts with BAX isoform Sigma. Interacts directly with PMAIP1. Interacts with RTL10/BOP. Interacts with ING4. Interacts with UBQLN4. As to expression, seems to be restricted to the hematopoietic compartment. Expressed in peripheral blood, spleen, and bone marrow, at moderate levels in lung, small intestine and testis, at a minimal levels in other tissues. Also found in vascular smooth muscle cells and hematopoietic malignancies.

It localises to the cytoplasm. Retards apoptosis induced by IL-3 deprivation. May function in the response of hemopoietic cells to external signals and in maintaining endothelial survival during infection. Can inhibit apoptosis induced by serum starvation in the mammary epithelial cell line HC11. The protein is Bcl-2-related protein A1 (BCL2A1) of Homo sapiens (Human).